A 720-amino-acid polypeptide reads, in one-letter code: 1-deoxy-D-xylulose-5-phosphate synthase 1, chloroplastic (720 aa).

The transit peptide at 1–51 directs the protein to the chloroplast; it reads MALTTFSISRGGFVGALPQEGHFAPAAAELSLHKLQSRPHKARRRSSSSIS. Over residues 35 to 46 the composition is skewed to basic residues; it reads LQSRPHKARRRS. The interval 35–74 is disordered; it reads LQSRPHKARRRSSSSISASLSTEREAAEYHSQRPPTPLLD. Residues 56–65 are compositionally biased toward basic and acidic residues; the sequence is TEREAAEYHS. Residues His-142 and 183-185 each bind thiamine diphosphate; that span reads GHS. Asp-214 provides a ligand contact to Mg(2+). Residues 215-216, Asn-243, Tyr-364, and Glu-446 contribute to the thiamine diphosphate site; that span reads GA. Mg(2+) is bound at residue Asn-243.

This sequence belongs to the transketolase family. DXPS subfamily. In terms of assembly, homodimer. Requires Mg(2+) as cofactor. The cofactor is thiamine diphosphate.

It is found in the plastid. The protein resides in the chloroplast stroma. The enzyme catalyses D-glyceraldehyde 3-phosphate + pyruvate + H(+) = 1-deoxy-D-xylulose 5-phosphate + CO2. It participates in metabolic intermediate biosynthesis; 1-deoxy-D-xylulose 5-phosphate biosynthesis; 1-deoxy-D-xylulose 5-phosphate from D-glyceraldehyde 3-phosphate and pyruvate: step 1/1. Functionally, catalyzes the acyloin condensation reaction between C atoms 2 and 3 of pyruvate and glyceraldehyde 3-phosphate to yield 1-deoxy-D-xylulose-5-phosphate (DXP). Is a limiting enzyme for plastidic isoprenoid biosynthesis and essential for chloroplast development. The polypeptide is 1-deoxy-D-xylulose-5-phosphate synthase 1, chloroplastic (CLA1) (Oryza sativa subsp. japonica (Rice)).